The primary structure comprises 483 residues: Probable glycine dehydrogenase (decarboxylating) subunit 2 (483 aa).

Residues 1–24 (MLIFDHSRPGRTAAAQLPATGGDL) are disordered. The residue at position 264 (Lys264) is an N6-(pyridoxal phosphate)lysine.

It belongs to the GcvP family. C-terminal subunit subfamily. In terms of assembly, the glycine cleavage system is composed of four proteins: P, T, L and H. In this organism, the P 'protein' is a heterodimer of two subunits. It depends on pyridoxal 5'-phosphate as a cofactor.

It catalyses the reaction N(6)-[(R)-lipoyl]-L-lysyl-[glycine-cleavage complex H protein] + glycine + H(+) = N(6)-[(R)-S(8)-aminomethyldihydrolipoyl]-L-lysyl-[glycine-cleavage complex H protein] + CO2. Functionally, the glycine cleavage system catalyzes the degradation of glycine. The P protein binds the alpha-amino group of glycine through its pyridoxal phosphate cofactor; CO(2) is released and the remaining methylamine moiety is then transferred to the lipoamide cofactor of the H protein. This is Probable glycine dehydrogenase (decarboxylating) subunit 2 from Thiobacillus denitrificans (strain ATCC 25259 / T1).